Reading from the N-terminus, the 490-residue chain is Adenylosuccinate lyase (490 aa).

At Ala2 the chain carries N-acetylalanine. Substrate-binding positions include 26 to 27, 91 to 93, and 117 to 118; these read RY, RHD, and TS. Lys153 is modified (N6-acetyllysine). His165 (proton donor/acceptor) is an active-site residue. Gln247 serves as a coordination point for substrate. The Proton donor/acceptor role is filled by Ser295. Lys301 carries the post-translational modification N6-acetyllysine. Substrate contacts are provided by Arg309, Arg335, Ser340, and Arg344. Lys421 is covalently cross-linked (Glycyl lysine isopeptide (Lys-Gly) (interchain with G-Cter in SUMO1)).

Belongs to the lyase 1 family. Adenylosuccinate lyase subfamily. Homotetramer. Residues from neighboring subunits contribute catalytic and substrate-binding residues to each active site.

The catalysed reaction is N(6)-(1,2-dicarboxyethyl)-AMP = fumarate + AMP. The enzyme catalyses (2S)-2-[5-amino-1-(5-phospho-beta-D-ribosyl)imidazole-4-carboxamido]succinate = 5-amino-1-(5-phospho-beta-D-ribosyl)imidazole-4-carboxamide + fumarate. The protein operates within purine metabolism; AMP biosynthesis via de novo pathway; AMP from IMP: step 2/2. It participates in purine metabolism; IMP biosynthesis via de novo pathway; 5-amino-1-(5-phospho-D-ribosyl)imidazole-4-carboxamide from 5-amino-1-(5-phospho-D-ribosyl)imidazole-4-carboxylate: step 2/2. Catalyzes two non-sequential steps in de novo AMP synthesis: converts (S)-2-(5-amino-1-(5-phospho-D-ribosyl)imidazole-4-carboxamido)succinate (SAICAR) to fumarate plus 5-amino-1-(5-phospho-D-ribosyl)imidazole-4-carboxamide, and thereby also contributes to de novo IMP synthesis, and converts succinyladenosine monophosphate (SAMP) to AMP and fumarate. In Bos taurus (Bovine), this protein is Adenylosuccinate lyase (ADSL).